A 140-amino-acid polypeptide reads, in one-letter code: Ribosome-binding factor A (140 aa).

A disordered region spans residues 121 to 140 (KAAEHGREDEELDDTEQDDK). The segment covering 129-140 (DEELDDTEQDDK) has biased composition (acidic residues).

The protein belongs to the RbfA family. In terms of assembly, monomer. Binds 30S ribosomal subunits, but not 50S ribosomal subunits or 70S ribosomes.

Its subcellular location is the cytoplasm. Functionally, one of several proteins that assist in the late maturation steps of the functional core of the 30S ribosomal subunit. Associates with free 30S ribosomal subunits (but not with 30S subunits that are part of 70S ribosomes or polysomes). Required for efficient processing of 16S rRNA. May interact with the 5'-terminal helix region of 16S rRNA. In Shewanella loihica (strain ATCC BAA-1088 / PV-4), this protein is Ribosome-binding factor A.